The sequence spans 817 residues: Putative receptor protein kinase ZmPK1 (817 aa).

An N-terminal signal peptide occupies residues 1–28; that stretch reads MPRPLAALLSTACILSFFIALFPRAASS. The Bulb-type lectin domain maps to 29 to 158; it reads RDILPLGSSL…GGNTVWQSFD (130 aa). At 29–472 the chain is on the extracellular side; it reads RDILPLGSSL…HKTGGGESKW (444 aa). N-linked (GlcNAc...) asparagine glycans are attached at residues asparagine 83, asparagine 128, asparagine 228, and asparagine 279. The EGF-like domain maps to 292-328; that stretch reads MTQPCNIHGLCGPNGICHYSPTPTCSCPPGYATRNPG. 2 disulfide bridges follow: cysteine 296-cysteine 308 and cysteine 302-cysteine 316. Residues asparagine 329 and asparagine 339 are each glycosylated (N-linked (GlcNAc...) asparagine). The region spanning 342-424 is the PAN domain; that stretch reads CDRYDKRSMR…VRTIYLKLPT (83 aa). Cystine bridges form between cysteine 376–cysteine 398 and cysteine 384–cysteine 386. N-linked (GlcNAc...) asparagine glycosylation occurs at asparagine 452. The chain crosses the membrane as a helical span at residues 473–498; the sequence is FYFYGFIAAFFVVEVSFISFAWFFVL. The Cytoplasmic segment spans residues 499–817; it reads KRELRPSELW…AVQTLLSADD (319 aa). Residues 534-817 form the Protein kinase domain; it reads RKFKVELGRG…AVQTLLSADD (284 aa). Residues 540 to 548 and lysine 562 contribute to the ATP site; that span reads LGRGESGTV. Aspartate 658 functions as the Proton acceptor in the catalytic mechanism.

Belongs to the protein kinase superfamily. Ser/Thr protein kinase family. As to expression, expressed predominantly in the shoots and roots of young maize seedlings, and to a lesser extent in the silks.

The protein resides in the membrane. The catalysed reaction is L-seryl-[protein] + ATP = O-phospho-L-seryl-[protein] + ADP + H(+). The enzyme catalyses L-threonyl-[protein] + ATP = O-phospho-L-threonyl-[protein] + ADP + H(+). Probable receptor. Interaction with a ligand in the extracellular domain triggers the protein kinase activity of the cytoplasmic domain. This Zea mays (Maize) protein is Putative receptor protein kinase ZmPK1 (PK1).